The sequence spans 524 residues: Bifunctional purine biosynthesis protein PurH (524 aa).

Residues 1–144 (MTRRALVSVS…KNSAHVGVVV (144 aa)) enclose the MGS-like domain.

Belongs to the PurH family.

It carries out the reaction (6R)-10-formyltetrahydrofolate + 5-amino-1-(5-phospho-beta-D-ribosyl)imidazole-4-carboxamide = 5-formamido-1-(5-phospho-D-ribosyl)imidazole-4-carboxamide + (6S)-5,6,7,8-tetrahydrofolate. It catalyses the reaction IMP + H2O = 5-formamido-1-(5-phospho-D-ribosyl)imidazole-4-carboxamide. The protein operates within purine metabolism; IMP biosynthesis via de novo pathway; 5-formamido-1-(5-phospho-D-ribosyl)imidazole-4-carboxamide from 5-amino-1-(5-phospho-D-ribosyl)imidazole-4-carboxamide (10-formyl THF route): step 1/1. Its pathway is purine metabolism; IMP biosynthesis via de novo pathway; IMP from 5-formamido-1-(5-phospho-D-ribosyl)imidazole-4-carboxamide: step 1/1. The polypeptide is Bifunctional purine biosynthesis protein PurH (Anaeromyxobacter dehalogenans (strain 2CP-C)).